A 202-amino-acid polypeptide reads, in one-letter code: LexA repressor (202 aa).

The H-T-H motif DNA-binding region spans Val-29–Thr-49. Catalysis depends on for autocatalytic cleavage activity residues Ser-126 and Lys-163.

It belongs to the peptidase S24 family. In terms of assembly, homodimer.

The enzyme catalyses Hydrolysis of Ala-|-Gly bond in repressor LexA.. Represses a number of genes involved in the response to DNA damage (SOS response), including recA and lexA. In the presence of single-stranded DNA, RecA interacts with LexA causing an autocatalytic cleavage which disrupts the DNA-binding part of LexA, leading to derepression of the SOS regulon and eventually DNA repair. This is LexA repressor from Caldicellulosiruptor saccharolyticus (strain ATCC 43494 / DSM 8903 / Tp8T 6331).